The chain runs to 674 residues: Probable L-type lectin-domain containing receptor kinase I.5 (674 aa).

Residues Met-1 to Ser-22 form the signal peptide. At Ser-23–Gln-286 the chain is on the extracellular side. A legume-lectin like region spans residues Asp-25–Ser-258. Residues Asn-124, Asn-181, Asn-185, Asn-204, and Asn-225 are each glycosylated (N-linked (GlcNAc...) asparagine). The chain crosses the membrane as a helical span at residues Phe-287–Gly-307. At Val-308 to Ser-674 the chain is on the cytoplasmic side. A Protein kinase domain is found at Phe-344–Thr-625. Residues Leu-350–Val-358 and Lys-372 each bind ATP. The Proton acceptor role is filled by Asp-468. The span at Asn-649–Asn-662 shows a compositional bias: low complexity. Positions Asn-649–Ser-674 are disordered. Basic and acidic residues predominate over residues Ser-663–Ser-674.

The protein in the C-terminal section; belongs to the protein kinase superfamily. Ser/Thr protein kinase family. In the N-terminal section; belongs to the leguminous lectin family.

The protein resides in the cell membrane. The catalysed reaction is L-seryl-[protein] + ATP = O-phospho-L-seryl-[protein] + ADP + H(+). The enzyme catalyses L-threonyl-[protein] + ATP = O-phospho-L-threonyl-[protein] + ADP + H(+). This chain is Probable L-type lectin-domain containing receptor kinase I.5 (LECRK15), found in Arabidopsis thaliana (Mouse-ear cress).